The chain runs to 185 residues: Large ribosomal subunit protein uL5 (185 aa).

It belongs to the universal ribosomal protein uL5 family. In terms of assembly, part of the 50S ribosomal subunit; part of the 5S rRNA/L5/L18/L25 subcomplex. Contacts the 5S rRNA and the P site tRNA. Forms a bridge to the 30S subunit in the 70S ribosome.

Functionally, this is one of the proteins that bind and probably mediate the attachment of the 5S RNA into the large ribosomal subunit, where it forms part of the central protuberance. In the 70S ribosome it contacts protein S13 of the 30S subunit (bridge B1b), connecting the 2 subunits; this bridge is implicated in subunit movement. Contacts the P site tRNA; the 5S rRNA and some of its associated proteins might help stabilize positioning of ribosome-bound tRNAs. This chain is Large ribosomal subunit protein uL5, found in Bacteroides thetaiotaomicron (strain ATCC 29148 / DSM 2079 / JCM 5827 / CCUG 10774 / NCTC 10582 / VPI-5482 / E50).